The following is a 758-amino-acid chain: Solute carrier family 26 member 6 (758 aa).

At Met-1–Ala-117 the chain is on the cytoplasmic side. Residues Gly-118 to Phe-138 form a helical membrane-spanning segment. The Extracellular portion of the chain corresponds to Gly-139–Thr-187. Residue Asn-174 is glycosylated (N-linked (GlcNAc) asparagine). A helical membrane pass occupies residues Leu-188–Val-208. The Cytoplasmic portion of the chain corresponds to Thr-209–Thr-263. A helical membrane pass occupies residues Val-264–Leu-284. The Extracellular portion of the chain corresponds to Asn-285–Leu-292. A helical transmembrane segment spans residues Pro-293–Val-313. Topologically, residues Lys-314–Glu-340 are cytoplasmic. A helical membrane pass occupies residues Leu-341 to Ile-361. Topologically, residues Ser-362 to Glu-380 are extracellular. Residues Leu-381–Cys-401 form a helical membrane-spanning segment. Residues Ser-402–Gln-417 are Cytoplasmic-facing. A helical transmembrane segment spans residues Val-418 to Phe-438. At Arg-439 to Thr-485 the chain is on the extracellular side. The chain crosses the membrane as a helical span at residues Ile-486–Val-506. Topologically, residues Val-507–Leu-758 are cytoplasmic. The STAS domain maps to Glu-531–Ala-741. Residues Glu-585–Ser-608 form a disordered region. Ser-751 carries the phosphoserine modification.

As to quaternary structure, interacts (via C-terminal domain) with PDZK1 (via C-terminal PDZ domain); the interaction induces chloride and oxalate exchange transport. Interacts with CFTR, SLC26A3 and NHERF1. Interacts with AHCYL1; the interaction increases SLC26A6 activity. N-glycosylated. Glycosylation at Asn-174 positively regulates its chloride oxalate exchanger activity. In terms of tissue distribution, expressed in kidney (at protein level). Expressed in spermatogenic cells. Expressed in intestine, kidney, testis, brain, muscle, heart, and stomach. Expressed in the submandibular and sublingual salivary glands. Highly expressed in stomach, kidney, heart and small intestine, low in the lung, liver, testis, brain, skeletal muscle and colon. As to expression, expressed in the heart.

Its subcellular location is the cell membrane. It localises to the apical cell membrane. The protein resides in the cytoplasmic vesicle membrane. It is found in the microsome. The catalysed reaction is 2 hydrogencarbonate(in) + chloride(out) = 2 hydrogencarbonate(out) + chloride(in). It catalyses the reaction oxalate(in) + chloride(out) = oxalate(out) + chloride(in). It carries out the reaction oxalate(in) + formate(out) = oxalate(out) + formate(in). The enzyme catalyses oxalate(in) + sulfate(out) = oxalate(out) + sulfate(in). The catalysed reaction is formate(in) + chloride(out) = formate(out) + chloride(in). It catalyses the reaction sulfate(in) = sulfate(out). With respect to regulation, apical membrane chloride-bicarbonate exchange activity of the pancreatic duct is inhibited by 4,4'-diisothiocyanatostilbene-2,2'-disulfonic acid (DIDS). Oxalate secretion in the duodenum and chloride-formate exchange activity is inhibited by DIDS. Its activity is regulated as follows. Chloride-formate exchange activity and transcellular sulfate absorption is inhibited by 4,4'-diisothiocyanatostilbene-2,2'-disulfonic acid (DIDS). In terms of biological role, apical membrane anion-exchanger with wide epithelial distribution that plays a role as a component of the pH buffering system for maintaining acid-base homeostasis. Acts as a versatile DIDS-sensitive inorganic and organic anion transporter that mediates the uptake of monovalent anions like chloride, bicarbonate, formate and hydroxyl ion and divalent anions like sulfate and oxalate. Functions in multiple exchange modes involving pairs of these anions, which include chloride-bicarbonate, chloride-oxalate, oxalate-formate, oxalate-sulfate and chloride-formate exchange. Apical membrane chloride-bicarbonate exchanger that mediates luminal chloride absorption and bicarbonate secretion by the small intestinal brush border membrane and contributes to intracellular pH regulation in the duodenal upper villous epithelium during proton-coupled peptide absorption, possibly by providing a bicarbonate import pathway. Its association with carbonic anhydrase CA2 forms a bicarbonate transport metabolon; hence maximizes the local concentration of bicarbonate at the transporter site. Also mediates intestinal chloride absorption and oxalate secretion, thereby preventing hyperoxaluria and calcium oxalate urolithiasis. Transepithelial oxalate secretion, chloride-formate, chloride-oxalate and chloride-bicarbonate transport activities in the duodenum are inhibited by PKC activation in a calcium-independent manner. The apical membrane chloride-bicarbonate exchanger also provides a major route for fluid and bicarbonate secretion into the proximal tubules of the kidney as well as into the proximal part of the interlobular pancreatic ductal tree, where it mediates electrogenic chloride-bicarbonate exchange with a chloride-bicarbonate stoichiometry of 1:2, and hence will dilute and alkalinize protein-rich acinar secretion. Also mediates the transcellular sulfate absorption and oxalate secretion across the apical membrane in the duodenum and the formate ion efflux at the apical brush border of cells in the proximal tubules of kidney. Plays a role in sperm capacitation by increasing intracellular pH. Its function is as follows. Mediates electrogenic chloride-bicarbonate exchange with a chloride-bicarbonate stoichiometry of 1:2. Also mediates exchange of chloride-formate and chloride-oxalate ions. Mediates transcellular sulfate absorption. This chain is Solute carrier family 26 member 6, found in Mus musculus (Mouse).